The primary structure comprises 282 residues: Armadillo repeat-containing protein 1 (282 aa).

The residue at position 1 (Met-1) is an N-acetylmethionine. An ARM repeat occupies 39-81; the sequence is GCLPGLILFMDHPNPPVVHSALLALRYLAECRANREKMKGELG. Position 137 is a phosphothreonine (Thr-137). Ser-189, Ser-246, Ser-260, and Ser-267 each carry phosphoserine. The tract at residues 239–261 is disordered; it reads DYLPEDESPTKEQDKAVSRVGSH. Over residues 246–255 the composition is skewed to basic and acidic residues; it reads SPTKEQDKAV.

As to quaternary structure, interacts with mitochondrial contact site and cristae organizing system (MICOS) complex components IMMT/MIC60 and MICOS10/MIC10. Interacts with mitochondrial outer membrane sorting assembly machinery (SAM) complex components SAMM50 and MTX1.

The protein localises to the cytoplasm. It is found in the mitochondrion. It localises to the mitochondrion outer membrane. In association with mitochondrial contact site and cristae organizing system (MICOS) complex components and mitochondrial outer membrane sorting assembly machinery (SAM) complex components may regulate mitochondrial dynamics playing a role in determining mitochondrial length, distribution and motility. This is Armadillo repeat-containing protein 1 (ARMC1) from Bos taurus (Bovine).